Reading from the N-terminus, the 340-residue chain is Anthranilate phosphoribosyltransferase (340 aa).

5-phospho-alpha-D-ribose 1-diphosphate contacts are provided by residues glycine 78, 81–82, threonine 86, 88–91, 106–114, and serine 118; these read GD, NIST, and KHGNRSVSS. Glycine 78 lines the anthranilate pocket. Serine 90 is a binding site for Mg(2+). Asparagine 109 provides a ligand contact to anthranilate. Arginine 164 lines the anthranilate pocket. Residues aspartate 223 and glutamate 224 each contribute to the Mg(2+) site.

This sequence belongs to the anthranilate phosphoribosyltransferase family. In terms of assembly, homodimer. Mg(2+) is required as a cofactor.

It carries out the reaction N-(5-phospho-beta-D-ribosyl)anthranilate + diphosphate = 5-phospho-alpha-D-ribose 1-diphosphate + anthranilate. It functions in the pathway amino-acid biosynthesis; L-tryptophan biosynthesis; L-tryptophan from chorismate: step 2/5. In terms of biological role, catalyzes the transfer of the phosphoribosyl group of 5-phosphorylribose-1-pyrophosphate (PRPP) to anthranilate to yield N-(5'-phosphoribosyl)-anthranilate (PRA). The sequence is that of Anthranilate phosphoribosyltransferase from Bacillus pumilus (strain SAFR-032).